Consider the following 297-residue polypeptide: Pyridoxal 5'-phosphate synthase subunit Pdx1 (297 aa).

Asp-27 contributes to the D-ribose 5-phosphate binding site. Catalysis depends on Lys-84, which acts as the Schiff-base intermediate with D-ribose 5-phosphate. A D-ribose 5-phosphate-binding site is contributed by Gly-156. Arg-168 provides a ligand contact to D-glyceraldehyde 3-phosphate. Residues Gly-217 and 238-239 (GS) each bind D-ribose 5-phosphate.

It belongs to the PdxS/SNZ family. Homohexamer and homododecamer. In the presence of Pdx2, forms a dodecamer of heterodimers.

The enzyme catalyses aldehydo-D-ribose 5-phosphate + D-glyceraldehyde 3-phosphate + L-glutamine = pyridoxal 5'-phosphate + L-glutamate + phosphate + 3 H2O + H(+). The protein operates within cofactor biosynthesis; pyridoxal 5'-phosphate biosynthesis. Catalyzes the formation of pyridoxal 5'-phosphate from ribose 5-phosphate (RBP), glyceraldehyde 3-phosphate (G3P) and ammonia. The ammonia is provided by Pdx2. Can also use ribulose 5-phosphate and dihydroxyacetone phosphate as substrates, resulting from enzyme-catalyzed isomerization of RBP and G3P, respectively. This is Pyridoxal 5'-phosphate synthase subunit Pdx1 from Plasmodium berghei.